Consider the following 345-residue polypeptide: Anthranilate phosphoribosyltransferase (345 aa).

5-phospho-alpha-D-ribose 1-diphosphate-binding positions include Gly80, Gly83 to Asp84, Thr88, Asn90 to Thr93, Lys108 to Ser116, and Ser120. Gly80 lines the anthranilate pocket. Mg(2+) is bound at residue Ser92. Residue Asn111 coordinates anthranilate. Arg166 is a binding site for anthranilate. Mg(2+) is bound by residues Asp225 and Glu226.

This sequence belongs to the anthranilate phosphoribosyltransferase family. As to quaternary structure, homodimer. The cofactor is Mg(2+).

It catalyses the reaction N-(5-phospho-beta-D-ribosyl)anthranilate + diphosphate = 5-phospho-alpha-D-ribose 1-diphosphate + anthranilate. It functions in the pathway amino-acid biosynthesis; L-tryptophan biosynthesis; L-tryptophan from chorismate: step 2/5. Catalyzes the transfer of the phosphoribosyl group of 5-phosphorylribose-1-pyrophosphate (PRPP) to anthranilate to yield N-(5'-phosphoribosyl)-anthranilate (PRA). The protein is Anthranilate phosphoribosyltransferase of Acetivibrio thermocellus (strain ATCC 27405 / DSM 1237 / JCM 9322 / NBRC 103400 / NCIMB 10682 / NRRL B-4536 / VPI 7372) (Clostridium thermocellum).